The primary structure comprises 513 residues: MKLTVWTYEGPPHVGAMRVATGMKGLHYVLHAPQGDTYADLLFTMIERRDHRPPVTYTTFQARDLGSDTADLFKQTLQDAYDRFQPEALIVGASCTAELIQDDPGGMSETMGIPIPVIPLELPSYQRKENFGADETFFQIVRTLAKPMARTKQITCNLIGPTALGFRHRDDITELTGLLSDMGISVNVVAPMDATPTDIARIGAAHFNVLMYPETAETAARWMERELGQPYTKTVPIGVGATRDFIAEVAQIAGVAPYLDDSRLRLPWYSRSVDSTYLTGKRVFLFGDGTHVIAAARIARDEMGFEVVGLGCYNREMARPVRALARDFGIEALITDDYLEVESRIEALQPEMILGTQMERHIGKRLGIPCAVISAPVHVQDFPARYSPQMGVEGANVIFDTWVHPLVMGLEEHLLHMFRDDFEFHDAAGPSHHGGHSPKPQAAEPAPQAAPQPENTGTSVEVVWLADAERELKKIPFFVRGKARRNTETFASERGVGEISVDTLYEAKAHYAR.

Residue D36 participates in [4Fe-4S] cluster binding. D274 (proton donor) is an active-site residue. Substrate is bound at residue 409-410 (GL). The tract at residues 426–457 (DAAGPSHHGGHSPKPQAAEPAPQAAPQPENTG) is disordered. Residues 440–454 (PQAAEPAPQAAPQPE) show a composition bias toward low complexity.

The protein belongs to the ChlB/BchB/BchZ family. As to quaternary structure, protochlorophyllide reductase is composed of three subunits; BchL, BchN and BchB. Forms a heterotetramer of two BchB and two BchN subunits. [4Fe-4S] cluster serves as cofactor.

It carries out the reaction chlorophyllide a + oxidized 2[4Fe-4S]-[ferredoxin] + 2 ADP + 2 phosphate = protochlorophyllide a + reduced 2[4Fe-4S]-[ferredoxin] + 2 ATP + 2 H2O. It participates in porphyrin-containing compound metabolism; bacteriochlorophyll biosynthesis (light-independent). Functionally, component of the dark-operative protochlorophyllide reductase (DPOR) that uses Mg-ATP and reduced ferredoxin to reduce ring D of protochlorophyllide (Pchlide) to form chlorophyllide a (Chlide). This reaction is light-independent. The NB-protein (BchN-BchB) is the catalytic component of the complex. The polypeptide is Light-independent protochlorophyllide reductase subunit B (Roseobacter denitrificans (strain ATCC 33942 / OCh 114) (Erythrobacter sp. (strain OCh 114))).